Here is a 269-residue protein sequence, read N- to C-terminus: Shikimate dehydrogenase (NADP(+)) (269 aa).

Shikimate is bound by residues 17 to 19 and Thr-64; that span reads SKS. Lys-68 functions as the Proton acceptor in the catalytic mechanism. NADP(+) is bound at residue Glu-80. Shikimate is bound by residues Asn-89 and Asp-105. NADP(+) contacts are provided by residues 130-134, 154-159, and Met-213; these read GAGGA and NRTRAK. Tyr-215 contacts shikimate. Gly-237 is a binding site for NADP(+).

It belongs to the shikimate dehydrogenase family. Homodimer.

The enzyme catalyses shikimate + NADP(+) = 3-dehydroshikimate + NADPH + H(+). The protein operates within metabolic intermediate biosynthesis; chorismate biosynthesis; chorismate from D-erythrose 4-phosphate and phosphoenolpyruvate: step 4/7. Functionally, involved in the biosynthesis of the chorismate, which leads to the biosynthesis of aromatic amino acids. Catalyzes the reversible NADPH linked reduction of 3-dehydroshikimate (DHSA) to yield shikimate (SA). The polypeptide is Shikimate dehydrogenase (NADP(+)) (Neisseria lactamica).